The primary structure comprises 901 residues: Nuclear factor of activated T-cells, cytoplasmic 4 (901 aa).

Disordered regions lie at residues 15 to 179 (LVFG…LSSW) and 203 to 362 (NEAA…EDSV). A compositionally biased stretch (pro residues) spans 61 to 81 (IPRPPPPRPGMHSPPPRPAPS). A compositionally biased stretch (gly residues) spans 96 to 109 (GGPGGNAGGAGGGR). Residues 114 to 119 (PSIRIT) form a calcineurin-binding region. The segment covering 114–123 (PSIRITSISP) has biased composition (low complexity). Positions 151-165 (GFGGYREAGGQGGGA) are enriched in gly residues. Residues 166-179 (FFSPSPGSSSLSSW) show a composition bias toward low complexity. Phosphoserine; by MAPK7 and MAPK14 occurs at positions 168 and 170. Residues S213 and S217 each carry the phosphoserine; by MAPK8 and MAPK9 modification. One copy of the SP 1 repeat lies at 213-229 (SPLPSPRASPRPWTPED). A 2 approximate SP repeats region spans residues 213 to 293 (SPLPSPRASP…LSRRGSLGEE (81 aa)). Composition is skewed to pro residues over residues 215 to 227 (LPSPRASPRPWTP) and 254 to 263 (GPVPASPRPA). Residues 268 to 270 (KRR) carry the Nuclear localization signal motif. Residues 272 to 288 (SSSGTPSSASPALSRRG) are compositionally biased toward low complexity. An SP 2; approximate repeat occupies 277–293 (PSSASPALSRRGSLGEE). Phosphoserine is present on S289. At S334 the chain carries Phosphoserine; by RPS6KA3. S344 carries the phosphoserine modification. In terms of domain architecture, RHD spans 401–582 (SALPPLDWPL…VPIECSQRSA (182 aa)). A DNA-binding region spans residues 430-437 (RAHYETEG). Positions 586–683 (PQVETYSPSA…KRSPTQSFKF (98 aa)) constitute an IPT/TIG domain. The Nuclear localization signal signature appears at 672 to 674 (RRK). K689 participates in a covalent cross-link: Glycyl lysine isopeptide (Lys-Gly) (interchain with G-Cter in SUMO2). Disordered regions lie at residues 695 to 721 (DSSLRGFPSTSGPPFGPDVDFSPPRPP) and 827 to 869 (PQSA…FRDS).

Member of the multicomponent NFATC transcription complex that consists of at least two components, a pre-existing cytoplasmic component NFATC2 and an inducible nuclear component NFATC1. Other NFAT proteins, such as NFATC3, or members of the activating protein-1 (AP-1) family and MAF can also bind the complex. NFAT proteins can bind DNA as monomers or dimers. Component of a promoter-binding complex composed of STAT3, NFATC3 and NFATC4; complex formation is enhanced by calcineurin. Interacts with CREBBP; this interaction potentiates transcription activation. Interacts with MAPK8/JNK1 and MAPK9/JNK2. Interacts with GATA4 (via the second Zn finger). Interacts (via N-terminus) with IRAK1 (via C-terminus). Interacts with RPS6KA3. Interacts with HOMER1, HOMER2 and HOMER3; this interaction competes with calcineurin/PPP3CA-binding and hence prevents NFATC4 dephosphorylation and activation. Interacts with ESR1 and ESR2; this interaction decreases NFATC4 transcriptional activity. Interacts with MTOR and MAPK7/ERK5. Interacts with TRIM17; this interaction prevents NFATC3 nuclear localization. Interacts with TCF25 (via C-terminus); the interaction leads to suppression of NFATC4 transcription factor activity and is reduced following stimulation with angiotensin-2. Phosphorylated by NFATC-kinases; dephosphorylated by calcineurin/PPP3CA. Phosphorylated on Ser-168 and Ser-170 by MTOR, IRAK1, MAPK7/ERK5 and MAPK14/p38, on Ser-213 and Ser-217 by MAPK8 and MAPK9, and on Ser-289 and Ser-344 by RPS6KA3. Phosphorylated by GSK3B. Phosphorylation by GSK3B markedly increases NFATC4 ubiquitination. Phosphorylation by MAPK8/JNK1, MAPK9/JNK2 and RPS6KA3 may stimulate NFATC4 transcriptional activity. Phosphorylation at Ser-168 and Ser-170 is stimulated by UV irradiation. Post-translationally, ubiquitinated, leading to degradation by the proteasome. Ubiquitination may be stimulated by GSK3B-dependent phosphorylation. Polyubiquitin linkage mainly occurs through 'Lys-48'. In terms of tissue distribution, widely expressed. In the brain, expressed in neurons. Expressed in the hippocampus (at protein level). In the hippocampus, expressed in both the CA1-CA3 pyramidal cells and the dentate gyrus granular cells. Expressed in a subset of hippocampal cells representing adult-born neurons (at protein level). Expressed in the submandibular gland (at protein level). In the olfactory system, expressed at low levels in the glomerular and granular layers and in the mitral cell layer. In the cerebellum, expressed at moderate levels in granular neurons. Expressed at moderate levels in the choroid plexus and ependymal cells. Expressed in neurons of the cochlear nucleus (at protein level). Expressed at low levels in the heart (at protein level). Expressed in ventricular cardiomyocytes (at protein level). Expressed in the lung.

It localises to the cytoplasm. It is found in the nucleus. Its function is as follows. Ca(2+)-regulated transcription factor that is involved in several processes, including the development and function of the immune, cardiovascular, musculoskeletal, and nervous systems. Involved in T-cell activation, stimulating the transcription of cytokine genes, including that of IL2 and IL4. Following JAK/STAT signaling activation and as part of a complex with NFATC3 and STAT3, binds to the alpha-beta E4 promoter region of CRYAB and activates transcription in cardiomyocytes. Along with NFATC3, involved in embryonic heart development. Involved in mitochondrial energy metabolism required for cardiac morphogenesis and function. Transactivates many genes involved in heart physiology. Along with GATA4, binds to and activates NPPB/BNP promoter. Activates NPPA/ANP/ANF and MYH7/beta-MHC transcription. Binds to and transactivates AGTR2 gene promoter. Involved in the regulation of adult hippocampal neurogenesis. Involved in BDNF-driven pro-survival signaling in hippocampal adult-born neurons. Involved in the formation of long-term spatial memory and long-term potentiation. In cochlear nucleus neurons, may play a role in deafferentation-induced apoptosis during a developmental critical period when auditory neurons depend on afferent input for survival. Binds to and activates the BACE1/Beta-secretase 1 promoter, hence may regulate the proteolytic processing of the amyloid precursor protein (APP). Plays a role in adipocyte differentiation. May be involved in myoblast differentiation into myotubes. Binds the consensus DNA sequence 5'-GGAAAAT-3'. In the presence of CREBBP, activates TNF transcription. Binds to PPARG gene promoter and regulates its activity. Binds to PPARG and REG3G gene promoters. In Mus musculus (Mouse), this protein is Nuclear factor of activated T-cells, cytoplasmic 4.